The chain runs to 1050 residues: Diacylglycerol kinase iota (1050 aa).

Disordered stretches follow at residues Asn-52–Gly-73 and Pro-325–Gly-356. Residues Ser-332 to Lys-347 show a composition bias toward basic residues. A DAGKc domain is found at Pro-367 to Asn-502. ANK repeat units follow at residues Gly-943–Leu-972 and Thr-979–Gln-1008. The PDZ-binding signature appears at Thr-1048 to Val-1050.

Belongs to the eukaryotic diacylglycerol kinase family. As to quaternary structure, interacts (via PDZ-binding motif) with DLG4; controls the localization of DGKI to the synapse. Interacts (via PDZ-binding motif) with DLG1. Interacts (via PDZ-binding motif) with DLG2. Interacts (via PDZ-binding motif) with DLG3. May interact with RASGRP3; involved in the regulation of RASGRP3 activity. Specifically expressed in brain (at protein level). Expressed in hippocampus, cerebellum, brain stem and spinal cord (at protein level). Highly expressed in hippocampus, cerebellar cortex, olfactory bulb, and olfactory tubercle and to lower extent in the cerebral cortex, caudate putamen, and thalamus. Not detected in the white matter. Also expressed in eye. In terms of tissue distribution, major isoform in brain (at protein level). As to expression, minor isoform in brain (at protein level). Expressed in brain (at protein level).

The protein localises to the cell projection. It localises to the axon. It is found in the dendrite. The protein resides in the presynapse. Its subcellular location is the postsynapse. The protein localises to the postsynaptic density. It localises to the synaptic cell membrane. It is found in the cytoplasmic vesicle. The protein resides in the secretory vesicle. Its subcellular location is the synaptic vesicle membrane. The protein localises to the cytoplasm. It localises to the cytosol. It is found in the nucleus. The enzyme catalyses a 1,2-diacyl-sn-glycerol + ATP = a 1,2-diacyl-sn-glycero-3-phosphate + ADP + H(+). It carries out the reaction 1,2-di-(9Z-octadecenoyl)-sn-glycerol + ATP = 1,2-di-(9Z-octadecenoyl)-sn-glycero-3-phosphate + ADP + H(+). The catalysed reaction is 1-octadecanoyl-2-(9Z,12Z)-octadecadienoyl-sn-glycerol + ATP = 1-octadecanoyl-2-(9Z,12Z-octadecadienoyl)-sn-glycero-3-phosphate + ADP + H(+). It catalyses the reaction 1-octadecanoyl-2-(5Z,8Z,11Z,14Z-eicosatetraenoyl)-sn-glycerol + ATP = 1-octadecanoyl-2-(5Z,8Z,11Z,14Z-eicosatetraenoyl)-sn-glycero-3-phosphate + ADP + H(+). It functions in the pathway lipid metabolism; glycerolipid metabolism. Activated by phosphatidylserine. Diacylglycerol kinase that converts diacylglycerol/DAG into phosphatidic acid/phosphatidate/PA and regulates the respective levels of these two bioactive lipids. Thereby, acts as a central switch between the signaling pathways activated by these second messengers with different cellular targets and opposite effects in numerous biological processes. Has probably no preference for any of the diacylglycerols in terms of the acyl chain composition, especially for the acyl chain at the sn-2 position. By controlling the diacylglycerol/DAG-mediated activation of RASGRP3, negatively regulates the Rap1 signaling pathway. May play a role in presynaptic diacylglycerol/DAG signaling and control neurotransmitter release during metabotropic glutamate receptor-dependent long-term depression. Its function is as follows. Has a decreased affinity for ATP and a reduced diacylglycerol kinase activity. Has no preference for any of the diacylglycerols in terms of the acyl chain composition. In terms of biological role, has no diacylglycerol kinase activity. The sequence is that of Diacylglycerol kinase iota from Rattus norvegicus (Rat).